The chain runs to 876 residues: Leucine--tRNA ligase (876 aa).

The 'HIGH' region motif lies at 42-52 (PYPSGKLHMGH). Positions 634–638 (KMGKS) match the 'KMSKS' region motif. Lys-637 is a binding site for ATP.

This sequence belongs to the class-I aminoacyl-tRNA synthetase family.

Its subcellular location is the cytoplasm. The enzyme catalyses tRNA(Leu) + L-leucine + ATP = L-leucyl-tRNA(Leu) + AMP + diphosphate. This Variovorax paradoxus (strain S110) protein is Leucine--tRNA ligase.